Here is a 577-residue protein sequence, read N- to C-terminus: Cytidine monophosphate-N-acetylneuraminic acid hydroxylase (577 aa).

A propeptide spanning residues 1–4 (MMDR) is cleaved from the precursor. In terms of domain architecture, Rieske spans 14-112 (LSPAEVANLK…IEMDENNGLS (99 aa)). [2Fe-2S] cluster contacts are provided by cysteine 54, histidine 56, cysteine 75, and histidine 78.

The protein belongs to the CMP-Neu5Ac hydroxylase family. [2Fe-2S] cluster is required as a cofactor. In terms of tissue distribution, expressed in all tissues tested, except in brain.

Its subcellular location is the cytoplasm. The protein resides in the endoplasmic reticulum. The enzyme catalyses CMP-N-acetyl-beta-neuraminate + 2 Fe(II)-[cytochrome b5] + O2 + 2 H(+) = CMP-N-glycoloyl-beta-neuraminate + 2 Fe(III)-[cytochrome b5] + H2O. The protein operates within amino-sugar metabolism; N-acetylneuraminate metabolism. Functionally, sialic acids are components of carbohydrate chains of glycoconjugates and are involved in cell-cell recognition and cell-pathogen interactions. Catalyzes the conversion of CMP-N-acetylneuraminic acid (CMP-Neu5Ac) into its hydroxylated derivative CMP-N-glycolylneuraminic acid (CMP-Neu5Gc), a sialic acid abundantly expressed at the surface of many cells. The sequence is that of Cytidine monophosphate-N-acetylneuraminic acid hydroxylase (Cmah) from Mus musculus (Mouse).